We begin with the raw amino-acid sequence, 117 residues long: MNIFNILLPIVVLLLVFGLTAAIPDEKGLIFNLDNGELCLQTAQCKSGCCHRNSGVSLARCAPKAAETQKCSPLHIYGTYYFCPCESGLTCEVDRSIVGSITNTDYGYCEDQNNTTI.

Positions 1-22 (MNIFNILLPIVVLLLVFGLTAA) are cleaved as a signal peptide. 5 cysteine pairs are disulfide-bonded: Cys39/Cys50, Cys45/Cys61, Cys49/Cys83, Cys71/Cys91, and Cys85/Cys109.

The protein belongs to the colipase family. Forms a 1:1 stoichiometric complex with pancreatic lipase.

It is found in the secreted. Its function is as follows. Colipase is a cofactor of pancreatic lipase. It allows the lipase to anchor itself to the lipid-water interface. Without colipase the enzyme is washed off by bile salts, which have an inhibitory effect on the lipase. The polypeptide is Colipase (clps) (Xenopus tropicalis (Western clawed frog)).